Reading from the N-terminus, the 406-residue chain is tRNA (adenine(58)-N(1))-methyltransferase catalytic subunit TRM61 (406 aa).

Residues 119 to 121 (SGS), glutamate 137, arginine 142, 167 to 168 (DV), and aspartate 202 each bind S-adenosyl-L-methionine. Basic residues predominate over residues 281–293 (KRRKQHGTERRKR). Disordered regions lie at residues 281–323 (KRRK…FGKG) and 385–406 (ASKL…SNSV). Over residues 394–406 (ETSFEESQASNSV) the composition is skewed to polar residues.

This sequence belongs to the class I-like SAM-binding methyltransferase superfamily. TRM61 family. Heterotetramer; composed of two copies of TRM6 and two copies of TRM61.

It localises to the nucleus. The enzyme catalyses adenosine(58) in tRNA + S-adenosyl-L-methionine = N(1)-methyladenosine(58) in tRNA + S-adenosyl-L-homocysteine + H(+). Its function is as follows. Catalytic subunit of tRNA (adenine-N(1)-)-methyltransferase, which catalyzes the formation of N(1)-methyladenine at position 58 (m1A58) in initiator methionyl-tRNA. The sequence is that of tRNA (adenine(58)-N(1))-methyltransferase catalytic subunit TRM61 (TRM61) from Eremothecium gossypii (strain ATCC 10895 / CBS 109.51 / FGSC 9923 / NRRL Y-1056) (Yeast).